A 193-amino-acid polypeptide reads, in one-letter code: Large ribosomal subunit protein bL21 (193 aa).

The protein belongs to the bacterial ribosomal protein bL21 family. In terms of assembly, part of the 50S ribosomal subunit. Contacts protein L20.

In terms of biological role, this protein binds to 23S rRNA in the presence of protein L20. This chain is Large ribosomal subunit protein bL21, found in Ruegeria pomeroyi (strain ATCC 700808 / DSM 15171 / DSS-3) (Silicibacter pomeroyi).